A 201-amino-acid chain; its full sequence is Large ribosomal subunit protein uL18 (201 aa).

This sequence belongs to the universal ribosomal protein uL18 family. Part of the 50S ribosomal subunit. Contacts the 5S and 23S rRNAs.

This is one of the proteins that bind and probably mediate the attachment of the 5S RNA into the large ribosomal subunit, where it forms part of the central protuberance. This is Large ribosomal subunit protein uL18 from Thermococcus onnurineus (strain NA1).